We begin with the raw amino-acid sequence, 248 residues long: Protein maestro (248 aa).

The segment at 1 to 20 (MDQRQRRILGQPLSIPTSQP) is disordered. HEAT repeat units lie at residues 44–79 (EPLK…AREA) and 128–163 (SFFI…AAFA).

Its subcellular location is the nucleus. The protein resides in the nucleolus. This Macaca fascicularis (Crab-eating macaque) protein is Protein maestro (MRO).